A 77-amino-acid polypeptide reads, in one-letter code: Conotoxin Cl6.15 (77 aa).

An N-terminal signal peptide occupies residues M1–G19. Residues E20–V37 constitute a propeptide that is removed on maturation. Disulfide bonds link C49–C61, C55–C66, and C60–C75.

Belongs to the conotoxin I1 superfamily. As to expression, expressed by the venom duct.

Its subcellular location is the secreted. The polypeptide is Conotoxin Cl6.15 (Californiconus californicus (California cone)).